The chain runs to 209 residues: Uracil phosphoribosyltransferase (209 aa).

5-phospho-alpha-D-ribose 1-diphosphate-binding positions include R79, R104, and 131–139 (DPMLATGNS). Residues I194 and 199 to 201 (GDA) contribute to the uracil site. D200 provides a ligand contact to 5-phospho-alpha-D-ribose 1-diphosphate.

It belongs to the UPRTase family. Mg(2+) is required as a cofactor.

The catalysed reaction is UMP + diphosphate = 5-phospho-alpha-D-ribose 1-diphosphate + uracil. The protein operates within pyrimidine metabolism; UMP biosynthesis via salvage pathway; UMP from uracil: step 1/1. Its activity is regulated as follows. Allosterically activated by GTP. Functionally, catalyzes the conversion of uracil and 5-phospho-alpha-D-ribose 1-diphosphate (PRPP) to UMP and diphosphate. This Acidovorax sp. (strain JS42) protein is Uracil phosphoribosyltransferase.